The chain runs to 401 residues: Diphosphomevalonate decarboxylase (401 aa).

Residue Ala2 is modified to N-acetylalanine. (R)-5-diphosphomevalonate is bound by residues 24 to 27 (YWGK), Arg79, 157 to 162 (SGSACR), and Thr213. The tract at residues 382-401 (VLDDPHHHLLGPDGLPQRDL) is disordered.

Belongs to the diphosphomevalonate decarboxylase family. In terms of assembly, homodimer.

Its subcellular location is the cytoplasm. The enzyme catalyses (R)-5-diphosphomevalonate + ATP = isopentenyl diphosphate + ADP + phosphate + CO2. It participates in steroid biosynthesis; cholesterol biosynthesis. Its function is as follows. Catalyzes the ATP dependent decarboxylation of (R)-5-diphosphomevalonate to form isopentenyl diphosphate (IPP). Functions in the mevalonate (MVA) pathway leading to isopentenyl diphosphate (IPP), a key precursor for the biosynthesis of isoprenoids and sterol synthesis. This chain is Diphosphomevalonate decarboxylase (Mvd), found in Rattus norvegicus (Rat).